A 91-amino-acid chain; its full sequence is Acylphosphatase (91 aa).

The region spanning 5–91 (RLHAIVEGEV…KGEFTSFDTY (87 aa)) is the Acylphosphatase-like domain. Catalysis depends on residues Arg20 and Asn38.

The protein belongs to the acylphosphatase family.

The catalysed reaction is an acyl phosphate + H2O = a carboxylate + phosphate + H(+). The polypeptide is Acylphosphatase (acyP) (Metallosphaera sedula (strain ATCC 51363 / DSM 5348 / JCM 9185 / NBRC 15509 / TH2)).